A 163-amino-acid chain; its full sequence is NF-kappa-B inhibitor-interacting Ras-like protein 2 (163 aa).

Residues 1–163 (MGKSCKVVIC…SANWNLHPDH (163 aa)) are small GTPase-like. 11-18 (GQHGVGKT) contributes to the GTP binding site. The Effector region signature appears at 35–43 (MIETQEDIY). GTP-binding positions include 61 to 65 (DTRGL) and 120 to 123 (NKSD).

It belongs to the small GTPase superfamily. Ras family. KappaB-Ras subfamily.

The protein resides in the cytoplasm. Its function is as follows. Atypical Ras-like protein that acts as a potent regulator of NF-kappa-B activity by preventing the degradation of NF-kappa-B inhibitor beta (NFKBIB) by most signals, explaining why NFKBIB is more resistant to degradation. In Xenopus laevis (African clawed frog), this protein is NF-kappa-B inhibitor-interacting Ras-like protein 2 (nkiras2).